The primary structure comprises 280 residues: uncharacterized protein (280 aa).

It belongs to the eukaryotic-type primase small subunit family.

This is an uncharacterized protein from Archaeoglobus fulgidus (strain ATCC 49558 / DSM 4304 / JCM 9628 / NBRC 100126 / VC-16).